The sequence spans 163 residues: Ribosome maturation factor RimP (163 aa).

Belongs to the RimP family.

The protein localises to the cytoplasm. In terms of biological role, required for maturation of 30S ribosomal subunits. The chain is Ribosome maturation factor RimP from Streptococcus mutans serotype c (strain ATCC 700610 / UA159).